The chain runs to 213 residues: Ergothioneine transport ATP-binding protein EgtV (213 aa).

The 208-residue stretch at 5 to 212 (VTIENVSFNY…ATKTLEIKAL (208 aa)) folds into the ABC transporter domain. 37 to 44 (GESGSGKS) contacts ATP.

The protein belongs to the ABC transporter superfamily. In terms of assembly, the complex is composed of two ATP-binding proteins (EgtV) and two transmembrane proteins (EgtU).

Its subcellular location is the cell inner membrane. The enzyme catalyses ergothioneine(out) + ATP + H2O = ergothioneine(in) + ADP + phosphate + H(+). Its function is as follows. Part of the ABC transporter complex EgtUV involved in the uptake of ergothioneine (EGT), a natural low-molecular weight (LMW) thiol antioxidant which protects H.pylori against bleach stress. Responsible for energy coupling to the transport system. The polypeptide is Ergothioneine transport ATP-binding protein EgtV (Helicobacter pylori (strain G27)).